The following is a 50-amino-acid chain: PhoP/PhoQ regulator MgrB (50 aa).

At 1–4 (MLDL) the chain is on the cytoplasmic side. A helical transmembrane segment spans residues 5-27 (NITKLVTTVVIIAACCLFYLLAL). Residues 28-50 (DSYCDQGGTFSTGICAITTIVPW) lie on the Periplasmic side of the membrane.

It belongs to the MgrB family. In terms of assembly, probably interacts with the periplasmic domain of PhoQ.

Its subcellular location is the cell inner membrane. In terms of biological role, phoP-regulated transcription is redox-sensitive, being activated when the periplasm becomes more reducing. MgrB acts between DsbA/DsbB and PhoP/PhoQ in this pathway. Represses PhoP/PhoQ signaling, possibly by binding to the periplasmic domain of PhoQ, altering its activity and that of downstream effector PhoP. The polypeptide is PhoP/PhoQ regulator MgrB (Yersinia pestis).